A 376-amino-acid chain; its full sequence is tRNA 2-selenouridine synthase (376 aa).

The region spanning 15–138 (FVAGKPLIDL…MRQYLIGVIE (124 aa)) is the Rhodanese domain. The active-site S-selanylcysteine intermediate is the cysteine 98.

Belongs to the SelU family. As to quaternary structure, monomer.

The catalysed reaction is 5-methylaminomethyl-2-thiouridine(34) in tRNA + selenophosphate + (2E)-geranyl diphosphate + H2O + H(+) = 5-methylaminomethyl-2-selenouridine(34) in tRNA + (2E)-thiogeraniol + phosphate + diphosphate. The enzyme catalyses 5-methylaminomethyl-2-thiouridine(34) in tRNA + (2E)-geranyl diphosphate = 5-methylaminomethyl-S-(2E)-geranyl-thiouridine(34) in tRNA + diphosphate. It carries out the reaction 5-methylaminomethyl-S-(2E)-geranyl-thiouridine(34) in tRNA + selenophosphate + H(+) = 5-methylaminomethyl-2-(Se-phospho)selenouridine(34) in tRNA + (2E)-thiogeraniol. It catalyses the reaction 5-methylaminomethyl-2-(Se-phospho)selenouridine(34) in tRNA + H2O = 5-methylaminomethyl-2-selenouridine(34) in tRNA + phosphate. Involved in the post-transcriptional modification of the uridine at the wobble position (U34) of tRNA(Lys), tRNA(Glu) and tRNA(Gln). Catalyzes the conversion of 2-thiouridine (S2U-RNA) to 2-selenouridine (Se2U-RNA). Acts in a two-step process involving geranylation of 2-thiouridine (S2U) to S-geranyl-2-thiouridine (geS2U) and subsequent selenation of the latter derivative to 2-selenouridine (Se2U) in the tRNA chain. The sequence is that of tRNA 2-selenouridine synthase from Shewanella oneidensis (strain ATCC 700550 / JCM 31522 / CIP 106686 / LMG 19005 / NCIMB 14063 / MR-1).